The primary structure comprises 515 residues: Ent-isokaurene C2/C3-hydroxylase (515 aa).

Residues 5–25 (LILDLCLSALFVVVLSKLVSS) traverse the membrane as a helical segment. Cysteine 452 is a binding site for heme.

It belongs to the cytochrome P450 family. The cofactor is heme.

It is found in the membrane. The enzyme catalyses ent-isokaurene + 2 reduced [NADPH--hemoprotein reductase] + 2 O2 = ent-isokaurene-2beta,3beta-diol + 2 oxidized [NADPH--hemoprotein reductase] + 2 H2O + 2 H(+). Functionally, enzyme of the diterpenoid metabolism involved in the biosynthesis of antibacterial oryzalides such as phytocassane. The protein is Ent-isokaurene C2/C3-hydroxylase (CYP71Z6) of Oryza sativa subsp. japonica (Rice).